The chain runs to 225 residues: Glutathione S-transferase Mu 3 (225 aa).

The GST N-terminal domain maps to 5-92 (SSMVLGYWDI…YIARKHNMCG (88 aa)). Residues 11–12 (YW), 50–54 (WLDVK), and 63–64 (NL) each bind glutathione. K54 participates in a covalent cross-link: Glycyl lysine isopeptide (Lys-Gly) (interchain with G-Cter in SUMO2). A Glycyl lysine isopeptide (Lys-Gly) (interchain with G-Cter in SUMO2) cross-link involves residue K73. Residue 76–77 (QS) participates in glutathione binding. Residues 94-212 (TEEEKIRVDI…QSDQFCKMPI (119 aa)) enclose the GST C-terminal domain. Y120 serves as a coordination point for substrate.

It belongs to the GST superfamily. Mu family. In terms of assembly, homodimer. The N-terminus is blocked. As to expression, testis and brain.

It is found in the cytoplasm. The catalysed reaction is RX + glutathione = an S-substituted glutathione + a halide anion + H(+). Functionally, conjugation of reduced glutathione to a wide number of exogenous and endogenous hydrophobic electrophiles. May govern uptake and detoxification of both endogenous compounds and xenobiotics at the testis and brain blood barriers. This is Glutathione S-transferase Mu 3 (GSTM3) from Homo sapiens (Human).